A 371-amino-acid chain; its full sequence is Putative ribonuclease 3 (371 aa).

The RNase III domain occupies alanine 10–aspartate 136.

This sequence belongs to the IIV-6 142R family.

The enzyme catalyses Endonucleolytic cleavage to 5'-phosphomonoester.. Its function is as follows. Digests double-stranded RNA. The protein is Putative ribonuclease 3 of Frog virus 3 (isolate Goorha) (FV-3).